A 314-amino-acid polypeptide reads, in one-letter code: Acetyl-coenzyme A carboxylase carboxyl transferase subunit beta (314 aa).

Residues 24-293 (LWIKCPDTGQ…IDAAPEPSPA (270 aa)) enclose the CoA carboxyltransferase N-terminal domain. The disordered stretch occupies residues 283-314 (EIDAAPEPSPAAEEPAEPMPAPEAAAPSAPPA). Composition is skewed to low complexity over residues 284–295 (IDAAPEPSPAAE) and 304–314 (PEAAAPSAPPA).

This sequence belongs to the AccD/PCCB family. As to quaternary structure, acetyl-CoA carboxylase is a heterohexamer composed of biotin carboxyl carrier protein (AccB), biotin carboxylase (AccC) and two subunits each of ACCase subunit alpha (AccA) and ACCase subunit beta (AccD).

The protein localises to the cytoplasm. The enzyme catalyses N(6)-carboxybiotinyl-L-lysyl-[protein] + acetyl-CoA = N(6)-biotinyl-L-lysyl-[protein] + malonyl-CoA. The protein operates within lipid metabolism; malonyl-CoA biosynthesis; malonyl-CoA from acetyl-CoA: step 1/1. Functionally, component of the acetyl coenzyme A carboxylase (ACC) complex. Biotin carboxylase (BC) catalyzes the carboxylation of biotin on its carrier protein (BCCP) and then the CO(2) group is transferred by the transcarboxylase to acetyl-CoA to form malonyl-CoA. This chain is Acetyl-coenzyme A carboxylase carboxyl transferase subunit beta, found in Nitrobacter hamburgensis (strain DSM 10229 / NCIMB 13809 / X14).